A 407-amino-acid polypeptide reads, in one-letter code: uncharacterized protein (407 aa).

At 1-290 (MPLNIIGTAL…SNSLRRVISN (290 aa)) the chain is on the lumenal side. The NADP(+) site is built by D114, K236, and S281. The active-site Lowers pKa of active site Tyr is the K236. The chain crosses the membrane as a helical span at residues 291-311 (GSVVLLIILYCILLYPILWLF). Topologically, residues 312–407 (TKSGRRGDQS…KSQNKSRKDD (96 aa)) are cytoplasmic. Residues 361-390 (ELQKKLFDNTERDILQLEKKVAAKRNANKT) are a coiled coil. Residues 383–407 (AKRNANKTGNQNSKKKSQNKSRKDD) are disordered. Over residues 395 to 407 (SKKKSQNKSRKDD) the composition is skewed to basic residues.

Belongs to the short-chain dehydrogenases/reductases (SDR) family.

It is found in the endoplasmic reticulum membrane. Its function is as follows. May be involved in lipid metabolism. This is an uncharacterized protein from Saccharomyces cerevisiae (strain ATCC 204508 / S288c) (Baker's yeast).